The sequence spans 307 residues: Ribonuclease Z (307 aa).

Residues histidine 63, histidine 65, aspartate 67, histidine 68, histidine 141, aspartate 212, and histidine 270 each contribute to the Zn(2+) site. The Proton acceptor role is filled by aspartate 67.

It belongs to the RNase Z family. As to quaternary structure, homodimer. Zn(2+) serves as cofactor.

It carries out the reaction Endonucleolytic cleavage of RNA, removing extra 3' nucleotides from tRNA precursor, generating 3' termini of tRNAs. A 3'-hydroxy group is left at the tRNA terminus and a 5'-phosphoryl group is left at the trailer molecule.. Its function is as follows. Zinc phosphodiesterase, which displays some tRNA 3'-processing endonuclease activity. Probably involved in tRNA maturation, by removing a 3'-trailer from precursor tRNA. In Bacillus cereus (strain ATCC 14579 / DSM 31 / CCUG 7414 / JCM 2152 / NBRC 15305 / NCIMB 9373 / NCTC 2599 / NRRL B-3711), this protein is Ribonuclease Z.